A 637-amino-acid polypeptide reads, in one-letter code: Probable potassium transport system protein Kup (637 aa).

12 helical membrane passes run L24–L44, V64–V84, A113–I133, P151–I171, L182–I202, L225–L245, A261–I281, P290–A310, I351–F371, Y381–V401, L409–N429, and V433–T453.

The protein belongs to the HAK/KUP transporter (TC 2.A.72) family.

It localises to the cell inner membrane. It carries out the reaction K(+)(in) + H(+)(in) = K(+)(out) + H(+)(out). Its function is as follows. Transport of potassium into the cell. Likely operates as a K(+):H(+) symporter. The sequence is that of Probable potassium transport system protein Kup from Burkholderia ambifaria (strain ATCC BAA-244 / DSM 16087 / CCUG 44356 / LMG 19182 / AMMD) (Burkholderia cepacia (strain AMMD)).